The primary structure comprises 256 residues: MNDQRKGDHAEPTTHFGYQDVPESQKAKKVAEVFHSVAAKYDLMNDVLSGGMHRLWKRFTIELSGVRAGNRVLDIAGGTGDLAAKFSRLVGPTGQVVLADINESMLKVGRDRLLDRGVAGNIEFVQADAEKLPFPDNHFDCVTIAFGLRNVTHKDEAIRSMLRVLKPGGRLLVLEFSKPTNKLMSKAYDAYSFAFMPLAGKLITNDSESYRYLAESIRMHPDQETLKAMMVEAGFDRVTYHNMTSGIVAVHRGIKP.

Residues 1–12 are compositionally biased toward basic and acidic residues; sequence MNDQRKGDHAEP. A disordered region spans residues 1 to 22; it reads MNDQRKGDHAEPTTHFGYQDVP. S-adenosyl-L-methionine is bound by residues Thr79, Asp100, and 128 to 129; that span reads DA.

The protein belongs to the class I-like SAM-binding methyltransferase superfamily. MenG/UbiE family.

The catalysed reaction is a 2-demethylmenaquinol + S-adenosyl-L-methionine = a menaquinol + S-adenosyl-L-homocysteine + H(+). The enzyme catalyses a 2-methoxy-6-(all-trans-polyprenyl)benzene-1,4-diol + S-adenosyl-L-methionine = a 5-methoxy-2-methyl-3-(all-trans-polyprenyl)benzene-1,4-diol + S-adenosyl-L-homocysteine + H(+). It participates in quinol/quinone metabolism; menaquinone biosynthesis; menaquinol from 1,4-dihydroxy-2-naphthoate: step 2/2. Its pathway is cofactor biosynthesis; ubiquinone biosynthesis. Functionally, methyltransferase required for the conversion of demethylmenaquinol (DMKH2) to menaquinol (MKH2) and the conversion of 2-polyprenyl-6-methoxy-1,4-benzoquinol (DDMQH2) to 2-polyprenyl-3-methyl-6-methoxy-1,4-benzoquinol (DMQH2). The protein is Ubiquinone/menaquinone biosynthesis C-methyltransferase UbiE of Pseudomonas putida (Arthrobacter siderocapsulatus).